A 427-amino-acid chain; its full sequence is Enolase (427 aa).

Gln162 lines the (2R)-2-phosphoglycerate pocket. The Proton donor role is filled by Glu204. Positions 241, 282, and 309 each coordinate Mg(2+). 4 residues coordinate (2R)-2-phosphoglycerate: Lys334, Arg363, Ser364, and Lys385. The Proton acceptor role is filled by Lys334.

The protein belongs to the enolase family. Requires Mg(2+) as cofactor.

It localises to the cytoplasm. The protein resides in the secreted. The protein localises to the cell surface. The enzyme catalyses (2R)-2-phosphoglycerate = phosphoenolpyruvate + H2O. It functions in the pathway carbohydrate degradation; glycolysis; pyruvate from D-glyceraldehyde 3-phosphate: step 4/5. Catalyzes the reversible conversion of 2-phosphoglycerate (2-PG) into phosphoenolpyruvate (PEP). It is essential for the degradation of carbohydrates via glycolysis. The chain is Enolase from Parafrankia sp. (strain EAN1pec).